Reading from the N-terminus, the 447-residue chain is Argininosuccinate synthase (447 aa).

Residues 17-25 and Ala43 contribute to the ATP site; that span reads AFSGGLDTS. Tyr99 contacts L-citrulline. The ATP site is built by Gly129 and Thr131. Positions 131, 135, and 136 each coordinate L-aspartate. Asn135 contributes to the L-citrulline binding site. Residue Asp136 participates in ATP binding. Residues Arg139 and Ser192 each coordinate L-citrulline. Asp194 lines the ATP pocket. Residues Thr201, Glu203, and Glu280 each contribute to the L-citrulline site.

This sequence belongs to the argininosuccinate synthase family. Type 2 subfamily. In terms of assembly, homotetramer.

The protein localises to the cytoplasm. The catalysed reaction is L-citrulline + L-aspartate + ATP = 2-(N(omega)-L-arginino)succinate + AMP + diphosphate + H(+). The protein operates within amino-acid biosynthesis; L-arginine biosynthesis; L-arginine from L-ornithine and carbamoyl phosphate: step 2/3. The polypeptide is Argininosuccinate synthase (Salmonella agona (strain SL483)).